A 542-amino-acid polypeptide reads, in one-letter code: Chaperonin GroEL 2 (542 aa).

ATP-binding positions include 29–32 (TLGP), 86–90 (DGTTT), Gly-413, 477–479 (NAA), and Asp-493.

This sequence belongs to the chaperonin (HSP60) family. As to quaternary structure, forms a cylinder of 14 subunits composed of two heptameric rings stacked back-to-back. Interacts with the co-chaperonin GroES.

It localises to the cytoplasm. The enzyme catalyses ATP + H2O + a folded polypeptide = ADP + phosphate + an unfolded polypeptide.. In terms of biological role, together with its co-chaperonin GroES, plays an essential role in assisting protein folding. The GroEL-GroES system forms a nano-cage that allows encapsulation of the non-native substrate proteins and provides a physical environment optimized to promote and accelerate protein folding. This chain is Chaperonin GroEL 2, found in Frankia alni (strain DSM 45986 / CECT 9034 / ACN14a).